Here is a 230-residue protein sequence, read N- to C-terminus: 2,3-bisphosphoglycerate-dependent phosphoglycerate mutase (230 aa).

Residues 10 to 17 (RHGESKWN), 23 to 24 (TG), Arg62, 89 to 92 (ERNY), Lys100, 116 to 117 (RR), and 185 to 186 (GN) contribute to the substrate site. The Tele-phosphohistidine intermediate role is filled by His11. Glu89 serves as the catalytic Proton donor/acceptor.

Belongs to the phosphoglycerate mutase family. BPG-dependent PGAM subfamily. As to quaternary structure, homodimer.

It catalyses the reaction (2R)-2-phosphoglycerate = (2R)-3-phosphoglycerate. Its pathway is carbohydrate degradation; glycolysis; pyruvate from D-glyceraldehyde 3-phosphate: step 3/5. Its function is as follows. Catalyzes the interconversion of 2-phosphoglycerate and 3-phosphoglycerate. This is 2,3-bisphosphoglycerate-dependent phosphoglycerate mutase from Buchnera aphidicola subsp. Cinara cedri (strain Cc).